The sequence spans 136 residues: Large ribosomal subunit protein uL16c (136 aa).

This sequence belongs to the universal ribosomal protein uL16 family. In terms of assembly, part of the 50S ribosomal subunit.

Its subcellular location is the plastid. The protein resides in the chloroplast. The protein is Large ribosomal subunit protein uL16c of Mesostigma viride (Green alga).